Consider the following 368-residue polypeptide: Epoxyqueuosine reductase QueH (368 aa).

Positions 6, 7, 87, and 90 each coordinate [4Fe-4S] cluster. C174 and C176 form a disulfide bridge.

This sequence belongs to the QueH family.

It carries out the reaction epoxyqueuosine(34) in tRNA + AH2 = queuosine(34) in tRNA + A + H2O. The protein operates within tRNA modification; tRNA-queuosine biosynthesis. Its function is as follows. Catalyzes the conversion of epoxyqueuosine (oQ) to queuosine (Q), which is a hypermodified base found in the wobble positions of tRNA(Asp), tRNA(Asn), tRNA(His) and tRNA(Tyr). This Helicobacter pylori (strain ATCC 700392 / 26695) (Campylobacter pylori) protein is Epoxyqueuosine reductase QueH.